The primary structure comprises 215 residues: Methylthioribulose-1-phosphate dehydratase (215 aa).

Zn(2+) contacts are provided by His-103 and His-105.

The protein belongs to the aldolase class II family. MtnB subfamily. Requires Zn(2+) as cofactor.

It carries out the reaction 5-(methylsulfanyl)-D-ribulose 1-phosphate = 5-methylsulfanyl-2,3-dioxopentyl phosphate + H2O. Its pathway is amino-acid biosynthesis; L-methionine biosynthesis via salvage pathway; L-methionine from S-methyl-5-thio-alpha-D-ribose 1-phosphate: step 2/6. Its function is as follows. Catalyzes the dehydration of methylthioribulose-1-phosphate (MTRu-1-P) into 2,3-diketo-5-methylthiopentyl-1-phosphate (DK-MTP-1-P). This chain is Methylthioribulose-1-phosphate dehydratase, found in Sulfurihydrogenibium sp. (strain YO3AOP1).